A 155-amino-acid polypeptide reads, in one-letter code: Small ribosomal subunit protein uS9 (155 aa).

Belongs to the universal ribosomal protein uS9 family.

The protein is Small ribosomal subunit protein uS9 of Allorhizobium ampelinum (strain ATCC BAA-846 / DSM 112012 / S4) (Agrobacterium vitis (strain S4)).